Consider the following 159-residue polypeptide: 6,7-dimethyl-8-ribityllumazine synthase (159 aa).

Residues Phe-23, 61-63, and 85-87 each bind 5-amino-6-(D-ribitylamino)uracil; these read SFE and AVI. (2S)-2-hydroxy-3-oxobutyl phosphate is bound at residue 90-91; sequence DT. The active-site Proton donor is the His-93. Residue Phe-118 participates in 5-amino-6-(D-ribitylamino)uracil binding. (2S)-2-hydroxy-3-oxobutyl phosphate is bound at residue Arg-132.

The protein belongs to the DMRL synthase family.

It catalyses the reaction (2S)-2-hydroxy-3-oxobutyl phosphate + 5-amino-6-(D-ribitylamino)uracil = 6,7-dimethyl-8-(1-D-ribityl)lumazine + phosphate + 2 H2O + H(+). It participates in cofactor biosynthesis; riboflavin biosynthesis; riboflavin from 2-hydroxy-3-oxobutyl phosphate and 5-amino-6-(D-ribitylamino)uracil: step 1/2. Its function is as follows. Catalyzes the formation of 6,7-dimethyl-8-ribityllumazine by condensation of 5-amino-6-(D-ribitylamino)uracil with 3,4-dihydroxy-2-butanone 4-phosphate. This is the penultimate step in the biosynthesis of riboflavin. The polypeptide is 6,7-dimethyl-8-ribityllumazine synthase (Synechococcus sp. (strain RCC307)).